The chain runs to 501 residues: Putative ribose/galactose/methyl galactoside import ATP-binding protein 1 (501 aa).

ABC transporter domains lie at 5–237 (VSLS…VGRQ) and 249–492 (VPGE…MTRS). An ATP-binding site is contributed by 37–44 (GENGAGKS).

Belongs to the ABC transporter superfamily. Carbohydrate importer 2 (CUT2) (TC 3.A.1.2) family.

The protein resides in the cell inner membrane. It carries out the reaction D-ribose(out) + ATP + H2O = D-ribose(in) + ADP + phosphate + H(+). The enzyme catalyses D-galactose(out) + ATP + H2O = D-galactose(in) + ADP + phosphate + H(+). Its function is as follows. Part of an ABC transporter complex involved in carbohydrate import. Could be involved in ribose, galactose and/or methyl galactoside import. Responsible for energy coupling to the transport system. The polypeptide is Putative ribose/galactose/methyl galactoside import ATP-binding protein 1 (Rhizobium meliloti (strain 1021) (Ensifer meliloti)).